The following is a 628-amino-acid chain: tRNA uridine 5-carboxymethylaminomethyl modification enzyme MnmG (628 aa).

Residues Gly-14 to Gly-19, Val-126, and Ser-181 each bind FAD. Residue Gly-273–Phe-287 participates in NAD(+) binding. Residue Gln-370 coordinates FAD.

This sequence belongs to the MnmG family. Homodimer. Heterotetramer of two MnmE and two MnmG subunits. FAD serves as cofactor.

The protein resides in the cytoplasm. In terms of biological role, NAD-binding protein involved in the addition of a carboxymethylaminomethyl (cmnm) group at the wobble position (U34) of certain tRNAs, forming tRNA-cmnm(5)s(2)U34. The chain is tRNA uridine 5-carboxymethylaminomethyl modification enzyme MnmG from Pelobacter propionicus (strain DSM 2379 / NBRC 103807 / OttBd1).